A 1527-amino-acid polypeptide reads, in one-letter code: DNA-directed RNA polymerase subunit beta'' (1527 aa).

Zn(2+)-binding residues include Cys-220, Cys-296, Cys-303, and Cys-306. Basic and acidic residues-rich tracts occupy residues 644–661 and 671–681; these read RTQE…RTRE and PENKYRTREGE. Disordered stretches follow at residues 644–681 and 712–793; these read RTQE…REGE and YRTL…KKEG. Acidic residues-rich tracts occupy residues 737–755 and 763–786; these read GEYE…SSED and TLEE…PEED.

Belongs to the RNA polymerase beta' chain family. RpoC2 subfamily. As to quaternary structure, in plastids the minimal PEP RNA polymerase catalytic core is composed of four subunits: alpha, beta, beta', and beta''. When a (nuclear-encoded) sigma factor is associated with the core the holoenzyme is formed, which can initiate transcription. Zn(2+) is required as a cofactor.

The protein localises to the plastid. The protein resides in the chloroplast. The enzyme catalyses RNA(n) + a ribonucleoside 5'-triphosphate = RNA(n+1) + diphosphate. Functionally, DNA-dependent RNA polymerase catalyzes the transcription of DNA into RNA using the four ribonucleoside triphosphates as substrates. The sequence is that of DNA-directed RNA polymerase subunit beta'' from Zea mays (Maize).